The following is a 193-amino-acid chain: Peptidyl-tRNA hydrolase (193 aa).

Y14 serves as a coordination point for tRNA. Residue H19 is the Proton acceptor of the active site. Positions 64, 66, and 112 each coordinate tRNA.

This sequence belongs to the PTH family. In terms of assembly, monomer.

It is found in the cytoplasm. The enzyme catalyses an N-acyl-L-alpha-aminoacyl-tRNA + H2O = an N-acyl-L-amino acid + a tRNA + H(+). In terms of biological role, hydrolyzes ribosome-free peptidyl-tRNAs (with 1 or more amino acids incorporated), which drop off the ribosome during protein synthesis, or as a result of ribosome stalling. Catalyzes the release of premature peptidyl moieties from peptidyl-tRNA molecules trapped in stalled 50S ribosomal subunits, and thus maintains levels of free tRNAs and 50S ribosomes. In Bartonella bacilliformis (strain ATCC 35685 / KC583 / Herrer 020/F12,63), this protein is Peptidyl-tRNA hydrolase.